Here is a 511-residue protein sequence, read N- to C-terminus: ATP synthase subunit alpha (511 aa).

170–177 serves as a coordination point for ATP; it reads GDRQTGKT.

The protein belongs to the ATPase alpha/beta chains family. F-type ATPases have 2 components, CF(1) - the catalytic core - and CF(0) - the membrane proton channel. CF(1) has five subunits: alpha(3), beta(3), gamma(1), delta(1), epsilon(1). CF(0) has three main subunits: a(1), b(2) and c(9-12). The alpha and beta chains form an alternating ring which encloses part of the gamma chain. CF(1) is attached to CF(0) by a central stalk formed by the gamma and epsilon chains, while a peripheral stalk is formed by the delta and b chains.

Its subcellular location is the cell inner membrane. The enzyme catalyses ATP + H2O + 4 H(+)(in) = ADP + phosphate + 5 H(+)(out). Its function is as follows. Produces ATP from ADP in the presence of a proton gradient across the membrane. The alpha chain is a regulatory subunit. The protein is ATP synthase subunit alpha of Pelagibacter ubique (strain HTCC1062).